A 261-amino-acid chain; its full sequence is RING finger and CHY zinc finger domain-containing protein 1 (261 aa).

Residues 13-80 form a CHY-type zinc finger; sequence QERGQRGCEH…AQQTCEECST (68 aa). Zn(2+)-binding residues include C20, H22, C33, C34, C40, C43, H44, H50, C62, C65, C75, C78, C87, C90, H101, C102, C105, C108, H118, C119, C122, C125, H134, and C136. The CTCHY-type zinc-finger motif lies at 82–144; it reads FGEYYCDICH…KCIENVSRQN (63 aa). The segment at 145–189 adopts an RING-type zinc-finger fold; it reads CPICLEDIHTSRVVAHVLPCGHLLHRTCYEEMLKEGYRCPLCMHS. S257 is subject to Phosphoserine.

Monomer and homodimer. Interacts with AR, MDM2, KAT5, PLAG1, PLAGL2, COPE, UBE2D2 and GORAB/NTKLBP1. Post-translationally, subject to ubiquitination and proteasomal degradation. Interaction with PLAGL2 or KAT5 enhances protein stability.

Its subcellular location is the nucleus. It is found in the nucleus speckle. The protein resides in the cytoplasm. It catalyses the reaction S-ubiquitinyl-[E2 ubiquitin-conjugating enzyme]-L-cysteine + [acceptor protein]-L-lysine = [E2 ubiquitin-conjugating enzyme]-L-cysteine + N(6)-ubiquitinyl-[acceptor protein]-L-lysine.. It functions in the pathway protein modification; protein ubiquitination. E3 ubiquitin-protein ligase that mediates ubiquitination of target proteins, including p53/TP53, TP73, HDAC1 and CDKN1B. Mediates ubiquitination and degradation of p53/TP53; preferentially acts on tetrameric p53/TP53. Catalyzes monoubiquitinates the translesion DNA polymerase POLH. Involved in the ribosome-associated quality control (RQC) pathway, which mediates the extraction of incompletely synthesized nascent chains from stalled ribosomes: RCHY1 acts downstream of NEMF and recognizes CAT tails associated with stalled nascent chains, leading to their ubiquitination and degradation. In terms of biological role, has no E3 ubiquitin-protein ligase activity. In Homo sapiens (Human), this protein is RING finger and CHY zinc finger domain-containing protein 1 (RCHY1).